The sequence spans 445 residues: Serine protease inhibitor A3F (445 aa).

N-linked (GlcNAc...) asparagine glycans are attached at residues Asn28, Asn94, Asn174, and Asn259. Positions 357-382 are RCL; that stretch reads GTEAAAGTGYQNLQCCQGVIYSMKIY.

The protein belongs to the serpin family.

The polypeptide is Serine protease inhibitor A3F (Serpina3f) (Mus musculus (Mouse)).